The sequence spans 196 residues: ATP-dependent Clp protease proteolytic subunit (196 aa).

Ser-96 functions as the Nucleophile in the catalytic mechanism. Residue His-121 is part of the active site.

This sequence belongs to the peptidase S14 family. Fourteen ClpP subunits assemble into 2 heptameric rings which stack back to back to give a disk-like structure with a central cavity, resembling the structure of eukaryotic proteasomes.

It localises to the cytoplasm. It catalyses the reaction Hydrolysis of proteins to small peptides in the presence of ATP and magnesium. alpha-casein is the usual test substrate. In the absence of ATP, only oligopeptides shorter than five residues are hydrolyzed (such as succinyl-Leu-Tyr-|-NHMec, and Leu-Tyr-Leu-|-Tyr-Trp, in which cleavage of the -Tyr-|-Leu- and -Tyr-|-Trp bonds also occurs).. Its function is as follows. Cleaves peptides in various proteins in a process that requires ATP hydrolysis. Has a chymotrypsin-like activity. Plays a major role in the degradation of misfolded proteins. This chain is ATP-dependent Clp protease proteolytic subunit, found in Streptococcus agalactiae serotype III (strain NEM316).